The following is a 312-amino-acid chain: Bifunctional pinoresinol-lariciresinol reductase (312 aa).

NADP(+) contacts are provided by residues 11–17, arginine 36, and lysine 45; that span reads GGTGYIG. The active-site Proton acceptor is lysine 138. Residue arginine 142 participates in NADP(+) binding. Histidine 270 contacts substrate.

This sequence belongs to the NmrA-type oxidoreductase family. Isoflavone reductase subfamily. Dimer.

The catalysed reaction is (+)-lariciresinol + NADP(+) = (+)-pinoresinol + NADPH + H(+). It catalyses the reaction (-)-secoisolariciresinol + NADP(+) = (+)-lariciresinol + NADPH + H(+). Its function is as follows. Reductase involved in lignan biosynthesis. Catalyzes the enantioselective sequential conversion of (+)-pinoresinol into (+)-lariciresinol and of (+)-lariciresinol into (-)-secoisolariciresinol. Abstracts the 4R-hydride from the NADPH cofactor during catalysis. The polypeptide is Bifunctional pinoresinol-lariciresinol reductase (Thuja plicata (Western red-cedar)).